The sequence spans 348 residues: Succinylglutamate desuccinylase (348 aa).

Zn(2+) contacts are provided by H67, E70, and H164. Residue E228 is part of the active site.

This sequence belongs to the AspA/AstE family. Succinylglutamate desuccinylase subfamily. The cofactor is Zn(2+).

The catalysed reaction is N-succinyl-L-glutamate + H2O = L-glutamate + succinate. It participates in amino-acid degradation; L-arginine degradation via AST pathway; L-glutamate and succinate from L-arginine: step 5/5. Functionally, transforms N(2)-succinylglutamate into succinate and glutamate. The chain is Succinylglutamate desuccinylase from Shewanella denitrificans (strain OS217 / ATCC BAA-1090 / DSM 15013).